A 96-amino-acid polypeptide reads, in one-letter code: HIG1 domain family member 1C (96 aa).

Topologically, residues 1–26 (MSSDEWSAAEDEGQLSRLLRKSRDSP) are cytoplasmic. In terms of domain architecture, HIG1 spans 1 to 91 (MSSDEWSAAE…YKDYIRPRFF (91 aa)). The chain crosses the membrane as a helical span at residues 27–44 (FVPVGMAGFVAVLSYGLY). Residues 45-58 (KLNSRREQKMSLHL) lie on the Extracellular side of the membrane. Residues 59–81 (IHVRVAAQGCVVGAVTLGVLYSM) form a helical membrane-spanning segment. Residues 82-96 (YKDYIRPRFFNVPKK) are Cytoplasmic-facing.

The protein resides in the membrane. This is HIG1 domain family member 1C (Higd1c) from Mus musculus (Mouse).